Reading from the N-terminus, the 236-residue chain is Ribose-5-phosphate isomerase A (236 aa).

Substrate contacts are provided by residues 29–32, 86–89, and 99–102; these read SGST, DGAD, and KGGG. Glutamate 108 serves as the catalytic Proton acceptor. Lysine 126 is a substrate binding site.

It belongs to the ribose 5-phosphate isomerase family. Homodimer.

It carries out the reaction aldehydo-D-ribose 5-phosphate = D-ribulose 5-phosphate. It participates in carbohydrate degradation; pentose phosphate pathway; D-ribose 5-phosphate from D-ribulose 5-phosphate (non-oxidative stage): step 1/1. In terms of biological role, catalyzes the reversible conversion of ribose-5-phosphate to ribulose 5-phosphate. The protein is Ribose-5-phosphate isomerase A of Prochlorococcus marinus (strain NATL2A).